A 394-amino-acid chain; its full sequence is Na(+)/H(+) antiporter NhaA (394 aa).

Transmembrane regions (helical) follow at residues 11–31, 59–79, 95–115, 125–145, 155–175, 177–197, 203–220, 254–274, 296–316, 328–348, and 365–385; these read LEAASGILLLVSALLAMIFAN, LLMWVNDGFMAVFFILVGMEV, IFPAVAALGGMIIPALVYWFI, GWAIPMATDIAFALGIVALLS, FLLALAIIDDLGAIIVIALFF, HEMSMQALTIASIAIVILVAM, TGLINYAIIGTILWASVL, ALAPWCSFAILPLFAFSNAGV, LIIGKPVGVFLFSYVAVLLGI, IFAIAVLCGIGFTMSMFIAGL, and LGILMGTFVAAIIGYFLLKIT.

It belongs to the NhaA Na(+)/H(+) (TC 2.A.33) antiporter family.

It localises to the cell inner membrane. The catalysed reaction is Na(+)(in) + 2 H(+)(out) = Na(+)(out) + 2 H(+)(in). Na(+)/H(+) antiporter that extrudes sodium in exchange for external protons. The sequence is that of Na(+)/H(+) antiporter NhaA from Actinobacillus pleuropneumoniae serotype 3 (strain JL03).